Reading from the N-terminus, the 421-residue chain is Alpha-1-antitrypsin (421 aa).

Positions 1–24 are cleaved as a signal peptide; that stretch reads MASSSTWGLLLLAGLCCLVPISLA. N-linked (GlcNAc...) asparagine glycosylation is found at Asn73 and Asn110. An RCL region spans residues 376–395; the sequence is GATILEAIPMSIPPNVKFNK. Residue Ser386 is modified to Phosphoserine.

The protein belongs to the serpin family. Interacts with CELA2A. Interacts with ERGIC3 and LMAN1/ERGIC53. Interacts with PRSS1/Trypsin.

The protein localises to the secreted. Functionally, inhibitor of serine proteases. Its primary target is elastase, but it also has a moderate affinity for plasmin and thrombin. The chain is Alpha-1-antitrypsin (SERPINA1) from Sus scrofa (Pig).